The chain runs to 309 residues: HPr kinase/phosphorylase (309 aa).

Catalysis depends on residues His138 and Lys159. 153–160 (GKSGVGKS) lines the ATP pocket. Residue Ser160 participates in Mg(2+) binding. The active-site Proton acceptor; for phosphorylation activity. Proton donor; for dephosphorylation activity is the Asp177. The important for the catalytic mechanism of both phosphorylation and dephosphorylation stretch occupies residues 201-210 (LEIRGLGIIN). Residue Glu202 coordinates Mg(2+). Arg243 is an active-site residue. The segment at 264–269 (PVRPGR) is important for the catalytic mechanism of dephosphorylation.

Belongs to the HPrK/P family. As to quaternary structure, homohexamer. Mg(2+) is required as a cofactor.

It carries out the reaction [HPr protein]-L-serine + ATP = [HPr protein]-O-phospho-L-serine + ADP + H(+). The enzyme catalyses [HPr protein]-O-phospho-L-serine + phosphate + H(+) = [HPr protein]-L-serine + diphosphate. Catalyzes the ATP- as well as the pyrophosphate-dependent phosphorylation of a specific serine residue in HPr, a phosphocarrier protein of the phosphoenolpyruvate-dependent sugar phosphotransferase system (PTS). HprK/P also catalyzes the pyrophosphate-producing, inorganic phosphate-dependent dephosphorylation (phosphorolysis) of seryl-phosphorylated HPr (P-Ser-HPr). The two antagonistic activities of HprK/P are regulated by several intracellular metabolites, which change their concentration in response to the absence or presence of rapidly metabolisable carbon sources (glucose, fructose, etc.) in the growth medium. Also phosphorylates/dephosphorylates the HPr-like catabolite repression protein crh on a specific serine residue. Therefore, by controlling the phosphorylation state of HPr and crh, HPrK/P is a sensor enzyme that plays a major role in the regulation of carbon metabolism and sugar transport: it mediates carbon catabolite repression (CCR), and regulates PTS-catalyzed carbohydrate uptake and inducer exclusion. In Geobacillus thermodenitrificans (strain NG80-2), this protein is HPr kinase/phosphorylase.